Reading from the N-terminus, the 359-residue chain is MKENRKIIHIDMDAFYASIEQRDNPKYKGKPLIVGGDPNRRGVVATCSYEARKYGIHSAMPSLTAYKLCPKAIFIRPRMEVYKKVSRQVMNILNEYSNLVEPLSLDEAFVDVSKSKRCKGSATLIALEIKERIFKEVGLTASAGVSFNKFLAKMASDFRKPDGITVITEENSKDFIRKLPIGKFFGVGRVTKNKLNNIGVFKGEDLLGFSEKELIGILGDRGKILYEFARGIDNRQVNPYRIRKSIGKEITLREDIEDIEEMIEILDKIAERVSESLCLLNKKGKTVTLKVKFNDFKHITRSITLEHFLKEKKEIMECVKDLISIVDFKNKKVRLLGITISSLEENIIIEEREQLSFDV.

The UmuC domain maps to 7 to 188 (IIHIDMDAFY…LPIGKFFGVG (182 aa)). Mg(2+)-binding residues include aspartate 11 and aspartate 106. Glutamate 107 is an active-site residue.

It belongs to the DNA polymerase type-Y family. In terms of assembly, monomer. Mg(2+) serves as cofactor.

It localises to the cytoplasm. It carries out the reaction DNA(n) + a 2'-deoxyribonucleoside 5'-triphosphate = DNA(n+1) + diphosphate. Functionally, poorly processive, error-prone DNA polymerase involved in untargeted mutagenesis. Copies undamaged DNA at stalled replication forks, which arise in vivo from mismatched or misaligned primer ends. These misaligned primers can be extended by PolIV. Exhibits no 3'-5' exonuclease (proofreading) activity. May be involved in translesional synthesis, in conjunction with the beta clamp from PolIII. The protein is DNA polymerase IV of Clostridium perfringens (strain SM101 / Type A).